A 440-amino-acid chain; its full sequence is Oligodendrocyte-myelin glycoprotein (440 aa).

The N-terminal stretch at 1–24 is a signal peptide; that stretch reads MEYQILKMSLCLFILLFLTPGILC. The LRRNT domain maps to 25 to 55; that stretch reads ICPLQCICTERHRHVDCSGRNLSTLPSGLQE. N-linked (GlcNAc...) asparagine glycosylation is found at N45 and N61. LRR repeat units follow at residues 56–77, 79–100, 101–121, 124–145, 147–168, 169–189, 192–213, and 216–239; these read NIIH…LTQY, NLRT…LPRS, LWNM…DTAY, NLKY…KNTL, SLEV…MPSK, LHIV…TLIN, NLTH…SFDQ, and QLQE…TYLL. An N-linked (GlcNAc...) asparagine glycan is attached at N103. 5 N-linked (GlcNAc...) asparagine glycosylation sites follow: N152, N176, N189, N192, and N234. 5 Ser/Thr-rich repeats span residues 229–270, 271–292, 293–335, 336–377, and 378–416; these read CDHK…YPTP, SGFT…INSL, SVVT…VPYP, EDTS…SPTP, and MTLS…TPLP. N-linked (GlcNAc...) asparagine glycosylation is found at N364 and N389. Residue S417 is the site of GPI-anchor amidated serine attachment. The propeptide at 418-440 is removed in mature form; sequence VANAWKVNASFLLLLNVVVMLAV. An N-linked (GlcNAc...) asparagine glycan is attached at N425.

In terms of assembly, binds to RTN4R. In terms of processing, O-glycosylated in its Ser/Thr-rich repeat domain. In terms of tissue distribution, oligodendrocytes and myelin of the central nervous system.

The protein resides in the cell membrane. Cell adhesion molecule contributing to the interactive process required for myelination in the central nervous system. This chain is Oligodendrocyte-myelin glycoprotein (OMG), found in Homo sapiens (Human).